A 248-amino-acid polypeptide reads, in one-letter code: Probable transcriptional regulatory protein Ecaj_0351 (248 aa).

The segment at 1 to 21 (MAGHSQFANIKHRKGAQDAKR) is disordered.

It belongs to the TACO1 family.

It is found in the cytoplasm. In Ehrlichia canis (strain Jake), this protein is Probable transcriptional regulatory protein Ecaj_0351.